The following is a 488-amino-acid chain: MNFTPTHTPVCRKRTVVSKRGVAVSGPTKRRGMADSLESTPLPSPEDRLAKLHPSKELLEYYQKKMAECEAENEDLLKKLELYKEACEGQHKLECDLQQREEEIAELQKALSDMQVCLFQEREHVLRLYSENDRLRIRELEDKKKIQNLLALVGTDAGEVTYFCKEPPHKVTILQKTIQAVGECEQSESSAFKADPKISKRRPSRERKESSEHYQRDIQTLILQVEALQAQLGEQTKLSREQIEGLIEDRRIHLEEIQVQHQRNQNKIKELTKNLHHTQELLYESTKDFLQLRSENQNKEKSWMLEKDNLMSKIKQYRVQCKKKEDKIGKVLPVMHESHHAQSEYIKSLKDKLVQEKKLSNMYQEQCISLEEELARIREEEGMRREIFKDRTNKMGKRLQIMTKRYEALERRRILEVEGFKTDIKVLRQKLKDLEQMLYKATVNARANQDLALLCEVRDSNRRAHKIQGELKNLKSKVFGLENELRLC.

Residues 21-48 are disordered; the sequence is GVAVSGPTKRRGMADSLESTPLPSPEDR. Ser-36 carries the post-translational modification Phosphoserine. Lys-51 participates in a covalent cross-link: Glycyl lysine isopeptide (Lys-Gly) (interchain with G-Cter in SUMO2). 2 coiled-coil regions span residues 55–118 and 208–488; these read SKEL…QVCL and KESS…LRLC. The disordered stretch occupies residues 192 to 213; sequence FKADPKISKRRPSRERKESSEH.

The protein is Coiled-coil domain-containing protein 77 (CCDC77) of Homo sapiens (Human).